Reading from the N-terminus, the 391-residue chain is Histidinol-phosphate aminotransferase (391 aa).

Lysine 248 carries the post-translational modification N6-(pyridoxal phosphate)lysine.

It belongs to the class-II pyridoxal-phosphate-dependent aminotransferase family. Histidinol-phosphate aminotransferase subfamily. Homodimer. It depends on pyridoxal 5'-phosphate as a cofactor.

It catalyses the reaction L-histidinol phosphate + 2-oxoglutarate = 3-(imidazol-4-yl)-2-oxopropyl phosphate + L-glutamate. Its pathway is amino-acid biosynthesis; L-histidine biosynthesis; L-histidine from 5-phospho-alpha-D-ribose 1-diphosphate: step 7/9. This is Histidinol-phosphate aminotransferase from Shewanella oneidensis (strain ATCC 700550 / JCM 31522 / CIP 106686 / LMG 19005 / NCIMB 14063 / MR-1).